The primary structure comprises 391 residues: Glycerophosphocholine acyltransferase 1 (391 aa).

The Cytoplasmic portion of the chain corresponds to 1–66; that stretch reads MSNNEDPINE…IAKQAEEHES (66 aa). Residues 67–87 traverse the membrane as a helical segment; sequence FINKVTHLLGVLGFGGFCFLL. Residues 88–92 are Lumenal-facing; it reads GARPQ. Residues 93-113 form a helical membrane-spanning segment; it reads DIPYVYCLFFFIFVPLRWIYY. Topologically, residues 114-119 are cytoplasmic; it reads RFKKWH. Residues 120 to 140 form a helical membrane-spanning segment; sequence YFLLDFCYYANTIFLVDLLLY. At 141–144 the chain is on the lumenal side; it reads PKDE. A helical membrane pass occupies residues 145-165; sequence KLFMVCFSFAEGPLAWALIVW. The Cytoplasmic portion of the chain corresponds to 166 to 172; the sequence is RCSLVFS. Residues 173–193 traverse the membrane as a helical segment; it reads SVDKIVSVLIHLLPGLVFFTI. At 194–226 the chain is on the lumenal side; it reads RWWNPATFEAMHPEGTSGRASWPYVEDKSFLFT. Residues 227 to 247 traverse the membrane as a helical segment; sequence WLFLVPLVAYFLWQLLYFLIV. Topologically, residues 248–294 are cytoplasmic; that stretch reads NVLRRQRLLRDPEVMTSYRELSKKAQKANNVWWRLSGLLGDQNRMLM. Residues 295-315 traverse the membrane as a helical segment; the sequence is YILLQALFTVATTALTVPIFL. Residues 316–318 are Lumenal-facing; the sequence is SYE. A helical transmembrane segment spans residues 319–339; sequence LHAVFQILKVSAAVWNGGSFL. Over 340 to 391 the chain is Cytoplasmic; that stretch reads LDVMPRQVILKEKKKSELQPAHIQQYHSEPKQDQSPNSMEIRMKTIHSAEEQ. Residues 354–391 form a disordered region; that stretch reads KSELQPAHIQQYHSEPKQDQSPNSMEIRMKTIHSAEEQ. Basic and acidic residues predominate over residues 380–391; that stretch reads IRMKTIHSAEEQ.

The protein belongs to the GPC1 family.

The protein localises to the membrane. The enzyme catalyses sn-glycerol 3-phosphocholine + an acyl-CoA = a monoacyl-sn-glycero-3-phosphocholine + CoA. The catalysed reaction is sn-glycero-3-phosphoethanolamine + an acyl-CoA = a monoacyl-sn-glycero-3-phosphoethanolamine + CoA. It carries out the reaction sn-glycerol 3-phosphocholine + hexadecanoyl-CoA = hexadecanoyl-sn-glycero-3-phosphocholine + CoA. It catalyses the reaction (9Z)-hexadecenoyl-CoA + sn-glycerol 3-phosphocholine = (9Z-hexadecenoyl)-sn-glycero-3-phosphocholine + CoA. The enzyme catalyses (9Z,12Z)-octadecadienoyl-CoA + sn-glycerol 3-phosphocholine = (9Z,12Z-octadecadienoyl)-sn-glycero-3-phosphocholine + CoA. The catalysed reaction is (12R)-hydroxy-(9Z)-octadecenoyl-CoA + sn-glycerol 3-phosphocholine = (12R-hydroxy-9Z-octadecenoyl)-sn-glycero-3-phosphocholine + CoA. It carries out the reaction (9Z,12Z,15Z)-octadecatrienoyl-CoA + sn-glycerol 3-phosphocholine = (9Z,12Z,15Z-octadecatrienoyl)-sn-glycero-3-phosphocholine + CoA. It catalyses the reaction sn-glycerol 3-phosphocholine + (9Z)-octadecenoyl-CoA = (9Z-octadecenoyl)-sn-glycero-3-phosphocholine + CoA. Glycerophosphocholine acyltransferase (GPCAT) that utilizes acyl-CoA to acylate glycero-3-phosphocholine (GPC), forming lysophosphatidylcholine (LPC). Shows broad acyl specificities with a preference for 16:0-CoA, polyunsaturated acyl-CoA, and the hydroxylated ricinoleoyl-CoA. Also catalyzes the acylation of glycero-3-phosphoethanolamine (GPE) with acyl-CoA. In addition to acyl-CoA, GPCAT efficiently utilizes LPC and lysophosphatidylethanolamine (LPE) as acyl donors in the acylation of GPC. Contributes to the maintenance of phosphatidylcholine (PC) homeostasis and might also have specific functions in acyl editing of PC, such as transferring acyl groups modified at the sn-2 position of PC to the sn-1. The chain is Glycerophosphocholine acyltransferase 1 from Ricinus communis (Castor bean).